The following is a 165-amino-acid chain: Large ribosomal subunit protein uL10 (165 aa).

The protein belongs to the universal ribosomal protein uL10 family. In terms of assembly, part of the ribosomal stalk of the 50S ribosomal subunit. The N-terminus interacts with L11 and the large rRNA to form the base of the stalk. The C-terminus forms an elongated spine to which L12 dimers bind in a sequential fashion forming a multimeric L10(L12)X complex.

Its function is as follows. Forms part of the ribosomal stalk, playing a central role in the interaction of the ribosome with GTP-bound translation factors. The protein is Large ribosomal subunit protein uL10 (rplJ) of Halalkalibacterium halodurans (strain ATCC BAA-125 / DSM 18197 / FERM 7344 / JCM 9153 / C-125) (Bacillus halodurans).